A 385-amino-acid chain; its full sequence is Probable caffeine synthase MTL1 (385 aa).

S-adenosyl-L-homocysteine is bound by residues Tyr-18, Cys-62, Asn-67, Asp-101, Leu-102, Ser-140, and Phe-141. Tyr-158, Gln-161, and Phe-162 together coordinate caffeine. Asn-179 is a Mg(2+) binding site. Thr-238 contributes to the caffeine binding site. Mg(2+) is bound by residues Asp-261, Phe-263, and Asn-264. Tyr-369 lines the caffeine pocket.

The protein belongs to the methyltransferase superfamily. Type-7 methyltransferase family. Mg(2+) serves as cofactor.

It participates in alkaloid biosynthesis. Its function is as follows. May be involved in the biosynthesis of caffeine. The chain is Probable caffeine synthase MTL1 from Coffea canephora (Robusta coffee).